Reading from the N-terminus, the 61-residue chain is Large ribosomal subunit protein uL30 (61 aa).

Belongs to the universal ribosomal protein uL30 family. In terms of assembly, part of the 50S ribosomal subunit.

This chain is Large ribosomal subunit protein uL30, found in Corynebacterium glutamicum (strain ATCC 13032 / DSM 20300 / JCM 1318 / BCRC 11384 / CCUG 27702 / LMG 3730 / NBRC 12168 / NCIMB 10025 / NRRL B-2784 / 534).